The following is a 110-amino-acid chain: Ribonuclease P protein component 4 (110 aa).

Zn(2+) is bound by residues cysteine 65, cysteine 68, cysteine 94, and cysteine 97.

The protein belongs to the eukaryotic/archaeal RNase P protein component 4 family. In terms of assembly, consists of a catalytic RNA component and at least 5 protein subunits. Requires Zn(2+) as cofactor.

It is found in the cytoplasm. The catalysed reaction is Endonucleolytic cleavage of RNA, removing 5'-extranucleotides from tRNA precursor.. In terms of biological role, part of ribonuclease P, a protein complex that generates mature tRNA molecules by cleaving their 5'-ends. This Methanococcus maripaludis (strain DSM 14266 / JCM 13030 / NBRC 101832 / S2 / LL) protein is Ribonuclease P protein component 4.